Here is a 692-residue protein sequence, read N- to C-terminus: MSASSVELEKIRNIGIMAHIDAGKTTTTERILLYTGVNRTVGEVHEGAATMDWMEQEKERGITITSAATTCWWKGAKINIIDTPGHVDFTIEVERSLRVLDGAVAVFDGVAGVEPQSETVWRQADKHNVPRLCFVNKMDRMGADFYRCAEMLVSKLSANPVILQLPIGVSESFVGVVDLVKMQAIYWQGDDFGAKFEYREIPADLAEQAALYREKLMEKIAETDDKFMDKYFGGEEISEEEIRAAIRAGTIGYHFVPVLCGSAFKNKGVQPLLDAVVDYLPSPVDTKDIIGENEKGEEINIKPDPKAPFVGLAFKVMNDPYVGSLTFVRIYSGTLNSGDVVINSHGDNKERIGRMLLMHANSREDVKSETAGNIVALAGLKNTSTGDTLCASGKVLTLERISAPDPVIEIAVEPKSTAEQEKMALAVARLCAEDPSLKVASNEETGQTLLRGMGELHLEIILDRLKREFNVNVNVGDPQVAYRETITQSYEIDYTHKKQTGGAGQFARVKMLFEPYDDGEFLFESKITGGAIPKEYIPGVEKGLVSVKNKGLLANYPIIGFKVTLMDGAFHDVDSSVLAFEIAARDAFKEAAKKLGLKIMEPLMRVEIVTPEEYTGTVIGDLNSRRGKIAEMEAKGNARVISGVVPLSRMFGYVNDLRSSTQGRASYSMEFKEYAKMPDHIAAELVDKRVAN.

The 276-residue stretch at 9–284 folds into the tr-type G domain; the sequence is EKIRNIGIMA…AVVDYLPSPV (276 aa). GTP-binding positions include 18 to 25, 82 to 86, and 136 to 139; these read AHIDAGKT, DTPGH, and NKMD.

It belongs to the TRAFAC class translation factor GTPase superfamily. Classic translation factor GTPase family. EF-G/EF-2 subfamily.

It localises to the cytoplasm. Its function is as follows. Catalyzes the GTP-dependent ribosomal translocation step during translation elongation. During this step, the ribosome changes from the pre-translocational (PRE) to the post-translocational (POST) state as the newly formed A-site-bound peptidyl-tRNA and P-site-bound deacylated tRNA move to the P and E sites, respectively. Catalyzes the coordinated movement of the two tRNA molecules, the mRNA and conformational changes in the ribosome. This is Elongation factor G from Neorickettsia sennetsu (strain ATCC VR-367 / Miyayama) (Ehrlichia sennetsu).